A 205-amino-acid chain; its full sequence is Large ribosomal subunit protein uL13 (205 aa).

It belongs to the universal ribosomal protein uL13 family.

The chain is Large ribosomal subunit protein uL13 (RPL13A) from Lupinus luteus (European yellow lupine).